We begin with the raw amino-acid sequence, 403 residues long: S-adenosylmethionine synthase (403 aa).

An ATP-binding site is contributed by histidine 15. Aspartate 17 contributes to the Mg(2+) binding site. Glutamate 43 contacts K(+). Residues glutamate 56 and glutamine 99 each contribute to the L-methionine site. The tract at residues 99 to 109 is flexible loop; sequence QSPHIAQGVDR. Residues 166–168, 232–233, aspartate 241, 247–248, alanine 264, and lysine 268 contribute to the ATP site; these read DAK, KF, and RK. Position 241 (aspartate 241) interacts with L-methionine. Lysine 272 is a binding site for L-methionine.

This sequence belongs to the AdoMet synthase family. Homotetramer; dimer of dimers. Requires Mg(2+) as cofactor. It depends on K(+) as a cofactor.

Its subcellular location is the cytoplasm. The enzyme catalyses L-methionine + ATP + H2O = S-adenosyl-L-methionine + phosphate + diphosphate. Its pathway is amino-acid biosynthesis; S-adenosyl-L-methionine biosynthesis; S-adenosyl-L-methionine from L-methionine: step 1/1. Its function is as follows. Catalyzes the formation of S-adenosylmethionine (AdoMet) from methionine and ATP. The overall synthetic reaction is composed of two sequential steps, AdoMet formation and the subsequent tripolyphosphate hydrolysis which occurs prior to release of AdoMet from the enzyme. In Stenotrophomonas maltophilia (strain K279a), this protein is S-adenosylmethionine synthase.